The sequence spans 437 residues: GTPase Obg (437 aa).

An Obg domain is found at 2-160 (SMFLDTAKIS…RELQLELKIL (159 aa)). A disordered region spans residues 127–146 (GNIRFATPRNPAPEIAENGE). Residues 161–338 (ADVGLVGFPS…LLEATAELLD (178 aa)) form the OBG-type G domain. GTP-binding positions include 167–174 (GFPSVGKS), 192–196 (FTTIV), 214–217 (DLPG), 284–287 (NKMD), and 319–321 (SSL). Positions 174 and 194 each coordinate Mg(2+). The OCT domain maps to 359-437 (GFNEEERPFE…IGNFEFEFVD (79 aa)).

This sequence belongs to the TRAFAC class OBG-HflX-like GTPase superfamily. OBG GTPase family. In terms of assembly, monomer. Requires Mg(2+) as cofactor.

The protein resides in the cytoplasm. Its function is as follows. An essential GTPase which binds GTP, GDP and possibly (p)ppGpp with moderate affinity, with high nucleotide exchange rates and a fairly low GTP hydrolysis rate. Plays a role in control of the cell cycle, stress response, ribosome biogenesis and in those bacteria that undergo differentiation, in morphogenesis control. The protein is GTPase Obg of Streptococcus thermophilus (strain ATCC BAA-491 / LMD-9).